Reading from the N-terminus, the 283-residue chain is CASP-like protein 4A3 (283 aa).

The segment at 1–86 (MRSPAKTMPS…VEETPSPIVV (86 aa)) is disordered. Over 1-135 (MRSPAKTMPS…SRREEVVKFS (135 aa)) the chain is Cytoplasmic. Low complexity predominate over residues 9–20 (PSMSPSSVSTEK). The segment covering 50-79 (SLDHSSESEKEDAKSKPESRRNKNPGKVEE) has biased composition (basic and acidic residues). A helical transmembrane segment spans residues 136 to 156 (ALGFRLSEVVLALISFSIMAA). Over 157 to 174 (DKTKGWSGDSFDRYKEYR) the chain is Extracellular. A helical membrane pass occupies residues 175–195 (FCLSVNVVAFVYSSFQACDLA). At 196–212 (YHLVKEKHLISHHLRPL) the chain is on the cytoplasmic side. A helical membrane pass occupies residues 213–233 (FEFIIDQVLAYLLMSASTAAV). At 234-251 (TRVDDWVSNWGKDEFTEM) the chain is on the extracellular side. The chain crosses the membrane as a helical span at residues 252 to 272 (ASASIAMSFLAFLAFAFSSLI). The Cytoplasmic portion of the chain corresponds to 273-283 (SGYNLFNQGSL).

The protein belongs to the Casparian strip membrane proteins (CASP) family. As to quaternary structure, homodimer and heterodimers.

Its subcellular location is the cell membrane. In Arabidopsis thaliana (Mouse-ear cress), this protein is CASP-like protein 4A3.